The sequence spans 477 residues: Cysteine protease ATG4b (477 aa).

Positions 11-39 (SKCSSSSTSEKRDISSPTSLVSDSASSDN) are disordered. Residues 25–39 (SSPTSLVSDSASSDN) are compositionally biased toward polar residues. The Nucleophile role is filled by Cys173. Residues Asp368 and His370 contribute to the active site. Residues 453–477 (AETSSSTETSTEISGEEHEDDWQLL) are disordered. Positions 454–465 (ETSSSTETSTEI) are enriched in low complexity.

It belongs to the peptidase C54 family. In terms of assembly, interacts with ATG8a and ATG8d. Constitutively expressed.

Its subcellular location is the cytoplasm. The catalysed reaction is [protein]-C-terminal L-amino acid-glycyl-phosphatidylethanolamide + H2O = [protein]-C-terminal L-amino acid-glycine + a 1,2-diacyl-sn-glycero-3-phosphoethanolamine. Functionally, cysteine protease that plays a key role in autophagy by mediating both proteolytic activation and delipidation of ATG8 family proteins. The protease activity is required for proteolytic activation of ATG8 family proteins: cleaves the C-terminal amino acid of ATG8 proteins to reveal a C-terminal glycine. Exposure of the glycine at the C-terminus is essential for ATG8 proteins conjugation to phosphatidylethanolamine (PE) and insertion to membranes, which is necessary for autophagy. In addition to the protease activity, also mediates delipidation of PE-conjugated ATG8 proteins. The sequence is that of Cysteine protease ATG4b from Arabidopsis thaliana (Mouse-ear cress).